Reading from the N-terminus, the 149-residue chain is Hut operon positive regulatory protein (149 aa).

This sequence belongs to the HutP family. As to quaternary structure, homohexamer.

In terms of biological role, antiterminator that binds to cis-acting regulatory sequences on the mRNA in the presence of histidine, thereby suppressing transcription termination and activating the hut operon for histidine utilization. The sequence is that of Hut operon positive regulatory protein from Geobacillus thermodenitrificans (strain NG80-2).